Reading from the N-terminus, the 335-residue chain is 4-hydroxy-3-methylbut-2-enyl diphosphate reductase (335 aa).

Cysteine 14 is a binding site for [4Fe-4S] cluster. Positions 43 and 81 each coordinate (2E)-4-hydroxy-3-methylbut-2-enyl diphosphate. Dimethylallyl diphosphate-binding residues include histidine 43 and histidine 81. 2 residues coordinate isopentenyl diphosphate: histidine 43 and histidine 81. Cysteine 103 provides a ligand contact to [4Fe-4S] cluster. Histidine 132 is a binding site for (2E)-4-hydroxy-3-methylbut-2-enyl diphosphate. Histidine 132 provides a ligand contact to dimethylallyl diphosphate. Histidine 132 provides a ligand contact to isopentenyl diphosphate. The Proton donor role is filled by glutamate 134. Residue threonine 179 coordinates (2E)-4-hydroxy-3-methylbut-2-enyl diphosphate. Cysteine 209 contacts [4Fe-4S] cluster. Positions 237, 238, 239, and 285 each coordinate (2E)-4-hydroxy-3-methylbut-2-enyl diphosphate. 4 residues coordinate dimethylallyl diphosphate: serine 237, serine 238, asparagine 239, and serine 285. Isopentenyl diphosphate is bound by residues serine 237, serine 238, asparagine 239, and serine 285.

Belongs to the IspH family. [4Fe-4S] cluster serves as cofactor.

It carries out the reaction isopentenyl diphosphate + 2 oxidized [2Fe-2S]-[ferredoxin] + H2O = (2E)-4-hydroxy-3-methylbut-2-enyl diphosphate + 2 reduced [2Fe-2S]-[ferredoxin] + 2 H(+). The catalysed reaction is dimethylallyl diphosphate + 2 oxidized [2Fe-2S]-[ferredoxin] + H2O = (2E)-4-hydroxy-3-methylbut-2-enyl diphosphate + 2 reduced [2Fe-2S]-[ferredoxin] + 2 H(+). The protein operates within isoprenoid biosynthesis; dimethylallyl diphosphate biosynthesis; dimethylallyl diphosphate from (2E)-4-hydroxy-3-methylbutenyl diphosphate: step 1/1. Its pathway is isoprenoid biosynthesis; isopentenyl diphosphate biosynthesis via DXP pathway; isopentenyl diphosphate from 1-deoxy-D-xylulose 5-phosphate: step 6/6. Catalyzes the conversion of 1-hydroxy-2-methyl-2-(E)-butenyl 4-diphosphate (HMBPP) into a mixture of isopentenyl diphosphate (IPP) and dimethylallyl diphosphate (DMAPP). Acts in the terminal step of the DOXP/MEP pathway for isoprenoid precursor biosynthesis. The chain is 4-hydroxy-3-methylbut-2-enyl diphosphate reductase from Deinococcus radiodurans (strain ATCC 13939 / DSM 20539 / JCM 16871 / CCUG 27074 / LMG 4051 / NBRC 15346 / NCIMB 9279 / VKM B-1422 / R1).